We begin with the raw amino-acid sequence, 646 residues long: MRAPGAGAASVVSLALLWLLGLPWTWSAAAALGVYVGSGGWRFLRIVCKTARRDLFGLSVLIRVRLELRRHQRAGHTIPRIFQAVVQRQPERLALVDAGTGECWTFAQLDAYSNAVANLFRQLGFAPGDVVAIFLEGRPEFVGLWLGLAKAGMEAALLNVNLRREPLAFCLGTSGAKALIFGGEMVAAVAEVSGHLGKSLIKFCSGDLGPEGILPDTHLLDPLLKEASTAPLAQIPSKGMDDRLFYIYTSGTTGLPKAAIVVHSRYYRMAAFGHHAYRMQAADVLYDCLPLYHSAGNIIGVGQCLIYGLTVVLRKKFSASRFWDDCIKYNCTVVQYIGEICRYLLKQPVREAERRHRVRLAVGNGLRPAIWEEFTERFGVRQIGEFYGATECNCSIANMDGKVGSCGFNSRILPHVYPIRLVKVNEDTMELLRDAQGLCIPCQAGEPGLLVGQINQQDPLRRFDGYVSESATSKKIAHSVFSKGDSAYLSGDVLVMDELGYMYFRDRSGDTFRWRGENVSTTEVEGVLSRLLGQTDVAVYGVAVPGVEGKAGMAAVADPHSLLDPNAIYQELQKVLAPYARPIFLRLLPQVDTTGTFKIQKTRLQREGFDPRQTSDRLFFLDLKQGHYLPLNEAVYTRICSGAFAL.

At 1–13 (MRAPGAGAASVVS) the chain is on the extracellular side. The helical transmembrane segment at 14-34 (LALLWLLGLPWTWSAAAALGV) threads the bilayer. The Cytoplasmic portion of the chain corresponds to 35-646 (YVGSGGWRFL…TRICSGAFAL (612 aa)). Residues 191 to 475 (EVSGHLGKSL…YVSESATSKK (285 aa)) are sufficient for oligomerization. Position 246-257 (246-257 (YIYTSGTTGLPK)) interacts with AMP.

It belongs to the ATP-dependent AMP-binding enzyme family. As to quaternary structure, self-associates. May function as a homodimer. Interacts with EPRS1; mediates the translocation of SLC27A1 from the cytoplasm to the plasma membrane thereby increasing the uptake of long-chain fatty acids. Interacts with DGAT2 and this interaction is enhanced in the presence of ZFYVE1. Highest levels of expression are detected in muscle and adipose tissue small, intermediate levels in small intestine, and barely detectable in liver. Expressed in brain gray matter.

Its subcellular location is the cell membrane. It localises to the endomembrane system. The protein resides in the cytoplasm. It carries out the reaction a fatty acid(in) = a fatty acid(out). The enzyme catalyses (9Z)-octadecenoate(out) = (9Z)-octadecenoate(in). It catalyses the reaction hexadecanoate(out) = hexadecanoate(in). The catalysed reaction is (9Z,12Z)-octadecadienoate(out) = (9Z,12Z)-octadecadienoate(in). It carries out the reaction (5Z,8Z,11Z,14Z)-eicosatetraenoate(out) = (5Z,8Z,11Z,14Z)-eicosatetraenoate(in). The enzyme catalyses a long-chain fatty acid + ATP + CoA = a long-chain fatty acyl-CoA + AMP + diphosphate. It catalyses the reaction (5Z,8Z,11Z,14Z)-eicosatetraenoate + ATP + CoA = (5Z,8Z,11Z,14Z)-eicosatetraenoyl-CoA + AMP + diphosphate. The catalysed reaction is a very long-chain fatty acid + ATP + CoA = a very long-chain fatty acyl-CoA + AMP + diphosphate. It carries out the reaction tetracosanoate + ATP + CoA = tetracosanoyl-CoA + AMP + diphosphate. Inhibited by Triacsin C. Functionally, mediates the import of long-chain fatty acids (LCFA) into the cell by facilitating their transport at the plasma membrane. Also functions as an acyl-CoA ligase catalyzing the ATP-dependent formation of fatty acyl-CoA using LCFA and very-long-chain fatty acids (VLCFA) as substrates, which prevents fatty acid efflux from cells and might drive more fatty acid uptake. May act directly as a bona fide transporter, or alternatively, in a cytoplasmic or membrane-associated multimeric protein complex to trap and draw fatty acids towards accumulation. Plays a pivotal role in regulating available LCFA substrates from exogenous sources in tissues undergoing high levels of beta-oxidation or triglyceride synthesis. May be involved in regulation of cholesterol metabolism. Probably involved in fatty acid transport across the blood barrier. This Homo sapiens (Human) protein is Long-chain fatty acid transport protein 1.